Reading from the N-terminus, the 157-residue chain is Crossover junction endodeoxyribonuclease RuvC (157 aa).

Residues Asp7, Glu67, and Asp140 contribute to the active site. Residues Asp7, Glu67, and Asp140 each coordinate Mg(2+).

This sequence belongs to the RuvC family. Homodimer which binds Holliday junction (HJ) DNA. The HJ becomes 2-fold symmetrical on binding to RuvC with unstacked arms; it has a different conformation from HJ DNA in complex with RuvA. In the full resolvosome a probable DNA-RuvA(4)-RuvB(12)-RuvC(2) complex forms which resolves the HJ. It depends on Mg(2+) as a cofactor.

The protein resides in the cytoplasm. The catalysed reaction is Endonucleolytic cleavage at a junction such as a reciprocal single-stranded crossover between two homologous DNA duplexes (Holliday junction).. In terms of biological role, the RuvA-RuvB-RuvC complex processes Holliday junction (HJ) DNA during genetic recombination and DNA repair. Endonuclease that resolves HJ intermediates. Cleaves cruciform DNA by making single-stranded nicks across the HJ at symmetrical positions within the homologous arms, yielding a 5'-phosphate and a 3'-hydroxyl group; requires a central core of homology in the junction. The consensus cleavage sequence is 5'-(A/T)TT(C/G)-3'. Cleavage occurs on the 3'-side of the TT dinucleotide at the point of strand exchange. HJ branch migration catalyzed by RuvA-RuvB allows RuvC to scan DNA until it finds its consensus sequence, where it cleaves and resolves the cruciform DNA. The sequence is that of Crossover junction endodeoxyribonuclease RuvC from Rickettsia africae (strain ESF-5).